The sequence spans 312 residues: Ribonuclease Z (312 aa).

His63, His65, Asp67, His68, His141, Asp212, and His270 together coordinate Zn(2+). The active-site Proton acceptor is the Asp67.

The protein belongs to the RNase Z family. In terms of assembly, homodimer. Requires Zn(2+) as cofactor.

It carries out the reaction Endonucleolytic cleavage of RNA, removing extra 3' nucleotides from tRNA precursor, generating 3' termini of tRNAs. A 3'-hydroxy group is left at the tRNA terminus and a 5'-phosphoryl group is left at the trailer molecule.. Its function is as follows. Zinc phosphodiesterase, which displays some tRNA 3'-processing endonuclease activity. Probably involved in tRNA maturation, by removing a 3'-trailer from precursor tRNA. In Latilactobacillus sakei subsp. sakei (strain 23K) (Lactobacillus sakei subsp. sakei), this protein is Ribonuclease Z.